Consider the following 196-residue polypeptide: Protein TEX261 (196 aa).

A run of 5 helical transmembrane segments spans residues 3-23 (FMYV…TLAV), 42-62 (SRII…LYVF), 70-90 (IGVG…FPFI), 97-117 (FILS…FFAE), and 125-145 (VLAY…VSLS).

It belongs to the SVP26 family. As to expression, detected in testis.

The protein localises to the membrane. The polypeptide is Protein TEX261 (Tex261) (Mus musculus (Mouse)).